An 86-amino-acid polypeptide reads, in one-letter code: Putative antitoxin VapB5 (86 aa).

The protein belongs to the phD/YefM antitoxin family. As to quaternary structure, forms a complex with VapC5.

Its function is as follows. Probable antitoxin component of a probable type II toxin-antitoxin (TA) system. The cognate toxin is VapC5. The protein is Putative antitoxin VapB5 (vapB5) of Mycobacterium tuberculosis (strain CDC 1551 / Oshkosh).